A 329-amino-acid polypeptide reads, in one-letter code: 4-hydroxythreonine-4-phosphate dehydrogenase (329 aa).

Substrate contacts are provided by His136 and Thr137. 3 residues coordinate a divalent metal cation: His166, His211, and His266. Substrate contacts are provided by Lys274, Asn283, and Arg292.

The protein belongs to the PdxA family. Homodimer. Zn(2+) is required as a cofactor. The cofactor is Mg(2+). It depends on Co(2+) as a cofactor.

The protein localises to the cytoplasm. The enzyme catalyses 4-(phosphooxy)-L-threonine + NAD(+) = 3-amino-2-oxopropyl phosphate + CO2 + NADH. Its pathway is cofactor biosynthesis; pyridoxine 5'-phosphate biosynthesis; pyridoxine 5'-phosphate from D-erythrose 4-phosphate: step 4/5. Catalyzes the NAD(P)-dependent oxidation of 4-(phosphooxy)-L-threonine (HTP) into 2-amino-3-oxo-4-(phosphooxy)butyric acid which spontaneously decarboxylates to form 3-amino-2-oxopropyl phosphate (AHAP). The sequence is that of 4-hydroxythreonine-4-phosphate dehydrogenase from Escherichia coli (strain K12 / MC4100 / BW2952).